Reading from the N-terminus, the 359-residue chain is Protein mab-21-like 2 (359 aa).

Belongs to the mab-21 family.

Its subcellular location is the nucleus. The protein localises to the cytoplasm. Its function is as follows. Required for several aspects of embryonic development including normal development of the eye. This chain is Protein mab-21-like 2 (MAB21L2), found in Homo sapiens (Human).